Consider the following 1072-residue polypeptide: Carbamoyl phosphate synthase large chain (1072 aa).

The tract at residues 1 to 401 (MPKYKDINKV…SLLKAVRSLE (401 aa)) is carboxyphosphate synthetic domain. 12 residues coordinate ATP: Arg129, Arg169, Gly175, Gly176, Lys208, Leu210, Glu215, Gly241, Val242, His243, Gln284, and Glu298. The ATP-grasp 1 domain occupies 133-327 (KRKMQEIGEP…IAKIAAKIAI (195 aa)). Residues Gln284, Glu298, and Asn300 each contribute to the Mg(2+) site. Residues Gln284, Glu298, and Asn300 each coordinate Mn(2+). Residues 402 to 544 (IKAYGLRLNN…YIYSTYGEED (143 aa)) form an oligomerization domain region. A carbamoyl phosphate synthetic domain region spans residues 545-929 (EVEIHDMPKV…ALYKALEGAG (385 aa)). Residues 671–861 (SKLLRELNIN…MVKLAVEVAL (191 aa)) enclose the ATP-grasp 2 domain. Arg707, Lys746, Ile748, Glu752, Gly777, Val778, His779, Ser780, Gln820, and Glu832 together coordinate ATP. Residues Gln820, Glu832, and Asn834 each contribute to the Mg(2+) site. Positions 820, 832, and 834 each coordinate Mn(2+). Positions 930–1072 (LKIPKKGKIL…QKDNVKNLVL (143 aa)) constitute an MGS-like domain. Positions 930–1072 (LKIPKKGKIL…QKDNVKNLVL (143 aa)) are allosteric domain.

This sequence belongs to the CarB family. In terms of assembly, composed of two chains; the small (or glutamine) chain promotes the hydrolysis of glutamine to ammonia, which is used by the large (or ammonia) chain to synthesize carbamoyl phosphate. Tetramer of heterodimers (alpha,beta)4. Mg(2+) serves as cofactor. It depends on Mn(2+) as a cofactor.

It catalyses the reaction hydrogencarbonate + L-glutamine + 2 ATP + H2O = carbamoyl phosphate + L-glutamate + 2 ADP + phosphate + 2 H(+). It carries out the reaction hydrogencarbonate + NH4(+) + 2 ATP = carbamoyl phosphate + 2 ADP + phosphate + 2 H(+). Its pathway is amino-acid biosynthesis; L-arginine biosynthesis; carbamoyl phosphate from bicarbonate: step 1/1. The protein operates within pyrimidine metabolism; UMP biosynthesis via de novo pathway; (S)-dihydroorotate from bicarbonate: step 1/3. In terms of biological role, large subunit of the glutamine-dependent carbamoyl phosphate synthetase (CPSase). CPSase catalyzes the formation of carbamoyl phosphate from the ammonia moiety of glutamine, carbonate, and phosphate donated by ATP, constituting the first step of 2 biosynthetic pathways, one leading to arginine and/or urea and the other to pyrimidine nucleotides. The large subunit (synthetase) binds the substrates ammonia (free or transferred from glutamine from the small subunit), hydrogencarbonate and ATP and carries out an ATP-coupled ligase reaction, activating hydrogencarbonate by forming carboxy phosphate which reacts with ammonia to form carbamoyl phosphate. The polypeptide is Carbamoyl phosphate synthase large chain (Thermoanaerobacter pseudethanolicus (strain ATCC 33223 / 39E) (Clostridium thermohydrosulfuricum)).